The sequence spans 925 residues: Bifunctional glutamine synthetase adenylyltransferase/adenylyl-removing enzyme (925 aa).

The segment at 1 to 426 (MTDASDLLSL…AQFDQVFADK (426 aa)) is adenylyl removase. Residues 436-925 (DQAAGCIWSG…AALWARVFGA (490 aa)) form an adenylyl transferase region.

This sequence belongs to the GlnE family. The cofactor is Mg(2+).

The catalysed reaction is [glutamine synthetase]-O(4)-(5'-adenylyl)-L-tyrosine + phosphate = [glutamine synthetase]-L-tyrosine + ADP. The enzyme catalyses [glutamine synthetase]-L-tyrosine + ATP = [glutamine synthetase]-O(4)-(5'-adenylyl)-L-tyrosine + diphosphate. In terms of biological role, involved in the regulation of glutamine synthetase GlnA, a key enzyme in the process to assimilate ammonia. When cellular nitrogen levels are high, the C-terminal adenylyl transferase (AT) inactivates GlnA by covalent transfer of an adenylyl group from ATP to specific tyrosine residue of GlnA, thus reducing its activity. Conversely, when nitrogen levels are low, the N-terminal adenylyl removase (AR) activates GlnA by removing the adenylyl group by phosphorolysis, increasing its activity. The regulatory region of GlnE binds the signal transduction protein PII (GlnB) which indicates the nitrogen status of the cell. The sequence is that of Bifunctional glutamine synthetase adenylyltransferase/adenylyl-removing enzyme from Burkholderia mallei (strain ATCC 23344).